Consider the following 86-residue polypeptide: ATP synthase subunit c (86 aa).

A run of 2 helical transmembrane segments spans residues 8–28 and 66–86; these read VLAA…GAGI and GIYA…IGML.

This sequence belongs to the ATPase C chain family. As to quaternary structure, F-type ATPases have 2 components, F(1) - the catalytic core - and F(0) - the membrane proton channel. F(1) has five subunits: alpha(3), beta(3), gamma(1), delta(1), epsilon(1). F(0) has three main subunits: a(1), b(2) and c(10-14). The alpha and beta chains form an alternating ring which encloses part of the gamma chain. F(1) is attached to F(0) by a central stalk formed by the gamma and epsilon chains, while a peripheral stalk is formed by the delta and b chains.

It localises to the cell membrane. Functionally, f(1)F(0) ATP synthase produces ATP from ADP in the presence of a proton or sodium gradient. F-type ATPases consist of two structural domains, F(1) containing the extramembraneous catalytic core and F(0) containing the membrane proton channel, linked together by a central stalk and a peripheral stalk. During catalysis, ATP synthesis in the catalytic domain of F(1) is coupled via a rotary mechanism of the central stalk subunits to proton translocation. In terms of biological role, key component of the F(0) channel; it plays a direct role in translocation across the membrane. A homomeric c-ring of between 10-14 subunits forms the central stalk rotor element with the F(1) delta and epsilon subunits. The polypeptide is ATP synthase subunit c (Natranaerobius thermophilus (strain ATCC BAA-1301 / DSM 18059 / JW/NM-WN-LF)).